A 615-amino-acid chain; its full sequence is Ankyrin repeat and LEM domain-containing protein 1 (615 aa).

ANK repeat units lie at residues 39–71, 75–104, and 108–137; these read DGAAAVHLAAGARHPRGLRCLGALLRQGGDPNA, EALTPLHVAAAWGCRRGLELLLSQGADPAL, and DGLRPLDLALQQGHLECARVLQDLDTRTRT. Positions 138–210 are disordered; that stretch reads RTRIGAETQE…DKHGSSASPP (73 aa). A Nuclear export signal motif is present at residues 271 to 280; sequence LNARLQALTL. Over residues 283-294 the composition is skewed to polar residues; it reads PNAAGFQSSPSS. A disordered region spans residues 283–315; sequence PNAAGFQSSPSSMPLLDRSPAHSPPRTPTPGAS. Residues 355–399 form the LEM domain; the sequence is HLPVSTVSDLELLKGLRALGENPHPITPFTRQLYHQQLEEAQIAP. The GIY-YIG domain maps to 448-566; it reads KSSFTYLLLD…ALGIQTLTNQ (119 aa). Positions 579-586 match the Nuclear localization signal motif; it reads PPARRRRL.

Interacts (via LEM domain) with BANF1; the interaction may favor BANF1 dimerization. In terms of tissue distribution, expression is predominant in adult bone marrow.

The protein localises to the cytoplasm. It is found in the nucleus. Its function is as follows. Endonuclease that probably plays a role in the DNA damage response and DNA repair. This is Ankyrin repeat and LEM domain-containing protein 1 (ANKLE1) from Homo sapiens (Human).